The sequence spans 235 residues: Protein FAM3B (235 aa).

The first 29 residues, 1–29, serve as a signal peptide directing secretion; the sequence is MRPLAGGLLKVVFVVFASLCAWYSGYLLA. 2 cysteine pairs are disulfide-bonded: Cys-63-Cys-91 and Cys-69-Cys-229. A GG-type lectin domain is found at 72 to 233; sequence DTYAYRLLSG…IQIEGCIPKE (162 aa). 2 N-linked (GlcNAc...) asparagine glycosylation sites follow: Asn-120 and Asn-208.

Belongs to the FAM3 family. Post-translationally, 2 N-termini have been observed in the mature protein: the first at Glu-30, resulting from signal peptide cleavage, the second at Ser-46. O-glycosylated. As to expression, highly expressed in the pancreas. Also found in the colon, kidney, prostate, small intestine and testis.

Its subcellular location is the secreted. In terms of biological role, induces apoptosis of alpha and beta cells in a dose- and time-dependent manner. The polypeptide is Protein FAM3B (FAM3B) (Homo sapiens (Human)).